The following is a 903-amino-acid chain: MPRSASQPPDDALQGNLFGAPEPAAPSATATASEPETASHDLSDDELGADAAARPRTRQATASEGSSEAPAANDSEPSRDEPAWGHHSQLDPLQLTPMLRHYVELKAAHPERVLLYRLGDFFECFFEDAIELSRVLELTLTGKEGGKAIGRVPMAGIPHHAAERYCAELIKQGYSVALCDQLETTPTKGALLKRDITRVLTPGTVLEEGMLSARRNNWLAAVVVEPAQGKQPLRWGLASADVSTGEVQVMQREDSSALHQQLAQQEASELLWAAALDTERPAWCPERLRLTPMASTPFSPVEAERTLQQHYGLSSLDGLGLPEHPLALQALGGLLGYLQDTQPLEEDSRIPLEVPAIVHRGDALVLDAQTRRNLELTATQRDNQLQGSLLWAIDRTLTAMGGRCLRRWLEAPLMDRQAIQQRQDLVSSLVGERSLRLAIRQLLRPMGDLERLAGRAGAGHAGARDLVAIADGLERLPQLTARLKSAISTGPEWLQQLLSPDPALAELARTIRHKLVEAPPLSLSEGDLIHDGVDPLLDGLRNQLDDQDAWLSHQEQQERQRCGISTLKLQHHRTFGYFLAVSKAKATAVPEHWIRRQTLANEERFITPDLKEREGRIFQLRARACQREYELFCQLREQVGAMAAPIRQAARAVAALDALTGLGDVAASGGYCAPTITDGRGLQLEDSRHPVVEQRLVETAFTPNDVQLGEGTDLVVLTGPNASGKSCYLRQIGLIQLMAQIGSWVPARSATVGIADRIFTRVGAVDDLAAGQSTFMVEMAETANILHHASDRSLVLLDEIGRGTATFDGLSIAWAVSEHLAGDLGSRTVFATHYHELNNLAAERDNVANFQVLVEETGEDLVFLHQVQAGGASRSYGIEAARLAGVPKPVVQRARQVLDQLTA.

Residues 1-89 form a disordered region; the sequence is MPRSASQPPD…DEPAWGHHSQ (89 aa). Composition is skewed to low complexity over residues 20–36 and 49–62; these read APEPAAPSATATASEPE and ADAAARPRTRQATA. 719–726 is a binding site for ATP; that stretch reads GPNASGKS.

This sequence belongs to the DNA mismatch repair MutS family.

Functionally, this protein is involved in the repair of mismatches in DNA. It is possible that it carries out the mismatch recognition step. This protein has a weak ATPase activity. The sequence is that of DNA mismatch repair protein MutS from Synechococcus sp. (strain CC9605).